We begin with the raw amino-acid sequence, 81 residues long: Relaxin-like protein AGF (81 aa).

3 cysteine pairs are disulfide-bonded: C14/C66, C26/C79, and C65/C70. An N-linked (GlcNAc...) asparagine glycan is attached at N37.

Belongs to the insulin family. Heterodimer of a B chain and an A chain linked by two disulfide bonds.

Its subcellular location is the secreted. Its function is as follows. Uncertain. The sequence is that of Relaxin-like protein AGF from Hypanus sabinus (Atlantic stingray).